The sequence spans 64 residues: Large ribosomal subunit protein bL35 (64 aa).

Residues 1-14 (MKNKTHKGTAKRVK) are compositionally biased toward basic residues. A disordered region spans residues 1–29 (MKNKTHKGTAKRVKVTGSGKLVREQANRR).

Belongs to the bacterial ribosomal protein bL35 family.

This is Large ribosomal subunit protein bL35 from Corynebacterium glutamicum (strain R).